Consider the following 432-residue polypeptide: D-amino acid dehydrogenase (432 aa).

3–17 contacts FAD; sequence VVILGSGVVGVTSAW.

It belongs to the DadA oxidoreductase family. FAD is required as a cofactor.

The catalysed reaction is a D-alpha-amino acid + A + H2O = a 2-oxocarboxylate + AH2 + NH4(+). Its pathway is amino-acid degradation; D-alanine degradation; NH(3) and pyruvate from D-alanine: step 1/1. Its function is as follows. Oxidative deamination of D-amino acids. The sequence is that of D-amino acid dehydrogenase from Citrobacter koseri (strain ATCC BAA-895 / CDC 4225-83 / SGSC4696).